A 287-amino-acid chain; its full sequence is Elongation factor Ts (287 aa).

Residues 80–83 (TDFL) form an involved in Mg(2+) ion dislocation from EF-Tu region.

This sequence belongs to the EF-Ts family.

The protein localises to the cytoplasm. Associates with the EF-Tu.GDP complex and induces the exchange of GDP to GTP. It remains bound to the aminoacyl-tRNA.EF-Tu.GTP complex up to the GTP hydrolysis stage on the ribosome. This chain is Elongation factor Ts, found in Pseudomonas entomophila (strain L48).